We begin with the raw amino-acid sequence, 362 residues long: DNA replication and repair protein RecF (362 aa).

30-37 (GPNGSGKT) serves as a coordination point for ATP.

The protein belongs to the RecF family.

It localises to the cytoplasm. The RecF protein is involved in DNA metabolism; it is required for DNA replication and normal SOS inducibility. RecF binds preferentially to single-stranded, linear DNA. It also seems to bind ATP. The protein is DNA replication and repair protein RecF of Proteus mirabilis (strain HI4320).